Here is a 214-residue protein sequence, read N- to C-terminus: Protein PsaE (214 aa).

Positions 1 to 24 (MSHCVVLNKLESVLIIGDSRYALS) are cleaved as a signal peptide. The ompR/PhoB-type DNA-binding region spans 1-94 (MSHCVVLNKL…YKNEGYSYQK (94 aa)).

Functionally, required for expression of pH 6 antigen. This chain is Protein PsaE (psaE), found in Yersinia pseudotuberculosis serotype I (strain IP32953).